Here is a 207-residue protein sequence, read N- to C-terminus: Peptidyl-tRNA hydrolase (207 aa).

Residue Tyr15 coordinates tRNA. The active-site Proton acceptor is His20. Residues Phe66, Asn68, and Asn114 each contribute to the tRNA site. The disordered stretch occupies residues 187–207 (HTTKPPRPKPARPATAESDKG). The segment covering 198–207 (RPATAESDKG) has biased composition (low complexity).

Belongs to the PTH family. In terms of assembly, monomer.

It localises to the cytoplasm. The catalysed reaction is an N-acyl-L-alpha-aminoacyl-tRNA + H2O = an N-acyl-L-amino acid + a tRNA + H(+). In terms of biological role, hydrolyzes ribosome-free peptidyl-tRNAs (with 1 or more amino acids incorporated), which drop off the ribosome during protein synthesis, or as a result of ribosome stalling. Its function is as follows. Catalyzes the release of premature peptidyl moieties from peptidyl-tRNA molecules trapped in stalled 50S ribosomal subunits, and thus maintains levels of free tRNAs and 50S ribosomes. The protein is Peptidyl-tRNA hydrolase of Delftia acidovorans (strain DSM 14801 / SPH-1).